The sequence spans 380 residues: Glycogenin-2 (380 aa).

UDP is bound by residues Leu10, Tyr16, and Arg95. Residues Leu10, Tyr16, Arg95, Lys104, Asp120, Ala121, Asp122, Asn158, Thr159, Asp185, Asp188, and Gln189 each coordinate UDP-alpha-D-glucose. 3 residues coordinate UDP: Asp120, Ala121, and Asp122. Residue Asp120 coordinates Mn(2+). Mn(2+) is bound at residue Asp122. Tyr230 and Tyr232 each carry an O-linked (Glc...) tyrosine glycan. Residues His249, Gly252, and Lys255 each contribute to the UDP site. Position 249 (His249) interacts with Mn(2+). Positions 252 and 255 each coordinate UDP-alpha-D-glucose. Positions 331–357 (SVDRNASQKSTAEKHDIEKPTSKPQSA) are disordered. The segment covering 341-351 (TAEKHDIEKPT) has biased composition (basic and acidic residues). The O-linked (Glc...) tyrosine glycan is linked to Tyr367.

It belongs to the glycosyltransferase 8 family. Glycogenin subfamily. In terms of assembly, interacts with glycogen synthase GSY2. It depends on Mn(2+) as a cofactor.

Its subcellular location is the cytoplasm. The protein localises to the vacuole. It carries out the reaction L-tyrosyl-[glycogenin] + UDP-alpha-D-glucose = alpha-D-glucosyl-L-tyrosyl-[glycogenin] + UDP + H(+). The catalysed reaction is [1,4-alpha-D-glucosyl](n)-L-tyrosyl-[glycogenin] + UDP-alpha-D-glucose = [1,4-alpha-D-glucosyl](n+1)-L-tyrosyl-[glycogenin] + UDP + H(+). Self-glucosylating initiator of glycogen synthesis. It catalyzes the formation of a short alpha (1,4)-glucosyl chain covalently attached via a glucose 1-O-tyrosyl linkage to internal tyrosine residues and these chains act as primers for the elongation reaction catalyzed by glycogen synthase. Capable of transferring glucosyl residues to unbound acceptors such as free oligoglucans or oligoglucan derivatives. In Saccharomyces cerevisiae (strain YJM789) (Baker's yeast), this protein is Glycogenin-2 (GLG2).